The following is a 150-amino-acid chain: Catabolic 3-dehydroquinase (150 aa).

Y24 functions as the Proton acceptor in the catalytic mechanism. Substrate-binding residues include N75, H81, and D88. H101 acts as the Proton donor in catalysis. Substrate contacts are provided by residues V102–S103 and R112.

It belongs to the type-II 3-dehydroquinase family. In terms of assembly, homododecamer. Adopts a ring-like structure, composed of an arrangement of two hexameric rings stacked on top of one another.

It catalyses the reaction 3-dehydroquinate = 3-dehydroshikimate + H2O. The protein operates within aromatic compound metabolism; 3,4-dihydroxybenzoate biosynthesis; 3,4-dihydroxybenzoate from 3-dehydroquinate: step 1/2. Functionally, is involved in the catabolism of quinate. Allows the utilization of quinate as carbon source via the beta-ketoadipate pathway. The polypeptide is Catabolic 3-dehydroquinase (Aspergillus clavatus (strain ATCC 1007 / CBS 513.65 / DSM 816 / NCTC 3887 / NRRL 1 / QM 1276 / 107)).